The primary structure comprises 305 residues: Protoheme IX farnesyltransferase 2 (305 aa).

Transmembrane regions (helical) follow at residues V31–I51, W53–I73, A103–N123, L125–L145, N152–T172, A179–I199, V231–L251, and A277–V297.

This sequence belongs to the UbiA prenyltransferase family. Protoheme IX farnesyltransferase subfamily.

It localises to the cell inner membrane. It catalyses the reaction heme b + (2E,6E)-farnesyl diphosphate + H2O = Fe(II)-heme o + diphosphate. The protein operates within porphyrin-containing compound metabolism; heme O biosynthesis; heme O from protoheme: step 1/1. In terms of biological role, converts heme B (protoheme IX) to heme O by substitution of the vinyl group on carbon 2 of heme B porphyrin ring with a hydroxyethyl farnesyl side group. This Pseudoalteromonas atlantica (strain T6c / ATCC BAA-1087) protein is Protoheme IX farnesyltransferase 2.